A 359-amino-acid polypeptide reads, in one-letter code: MIAAQAKLVYQLNKYYSERCQARKGAIAKTIREVCKVVSDVLKEVEVQEPRFISSLTEIDARFEGLEVVAPTEFEVVLYLNQMGVFNFVDDGSLPGCAVLKLSDGRKRSMSLWVEFITASGYLSARKIRSRFQTLVAQAVDKCSYRDVVKMIADTSEVKLRIRERYIVQITPAFKCTGIWPRSAAQWPLPHIPWPGPNRVAEVKAEGFNLLSKECYSLTGKQSSAESDAWVVHFAEAENRLLLGGCRGKCLSVLKTLRDRHLELPGQPLNNYHMKTLLLYECEKHPRETDWDEACLGDRLNGILLQLISCLQCRRCPHYFLPNLDLFQGKPHSALESAAKQTWRLAREILTNPKSLDKL.

It belongs to the mab-21 family.

Its subcellular location is the nucleus. It is found in the cytoplasm. In terms of biological role, required for several aspects of embryonic development including normal development of the eye. This chain is Protein mab-21-like 2-B (mab21l2-b), found in Xenopus laevis (African clawed frog).